Reading from the N-terminus, the 409-residue chain is Tryptophan synthase beta chain (409 aa).

K95 is subject to N6-(pyridoxal phosphate)lysine.

This sequence belongs to the TrpB family. Tetramer of two alpha and two beta chains. Requires pyridoxal 5'-phosphate as cofactor.

It catalyses the reaction (1S,2R)-1-C-(indol-3-yl)glycerol 3-phosphate + L-serine = D-glyceraldehyde 3-phosphate + L-tryptophan + H2O. Its pathway is amino-acid biosynthesis; L-tryptophan biosynthesis; L-tryptophan from chorismate: step 5/5. Functionally, the beta subunit is responsible for the synthesis of L-tryptophan from indole and L-serine. This Pseudomonas syringae pv. tomato (strain ATCC BAA-871 / DC3000) protein is Tryptophan synthase beta chain.